Here is a 726-residue protein sequence, read N- to C-terminus: Transcription factor 12 (726 aa).

Disordered stretches follow at residues 27 to 75, 89 to 223, 243 to 267, 289 to 309, 345 to 367, 380 to 409, 501 to 532, 558 to 624, and 694 to 726; these read SPPV…SRGF, LVSH…TFFD, YGGM…HSHD, SSFH…HTPP, PDHT…SPLA, TASG…YENS, MGSV…SSEL, VENQ…ERRM, and EEEK…MGHL. Residues 29–47 are compositionally biased toward polar residues; sequence PVNSGKNRPTTLGSSQFTA. Residues 55 to 74 show a composition bias toward low complexity; it reads SQASWASGGQSSPSFESSRG. Composition is skewed to polar residues over residues 145–157, 249–263, and 291–309; these read PGKS…SYTG, GSSS…YSNL, and FHRS…HTPP. The span at 348–359 shows a compositional bias: low complexity; it reads TSSSFPSNPSTP. 2 stretches are compositionally biased toward polar residues: residues 389 to 409 and 510 to 532; these read GTTQ…YENS and GSLN…SSEL. Positions 559–575 are enriched in basic and acidic residues; it reads ENQDKDDMHDSHASDDL. Residues 592–603 are compositionally biased toward low complexity; the sequence is SSRPSCELSCSS. Positions 612-624 are enriched in basic and acidic residues; it reads PEQKAERERERRM. Positions 621-674 constitute a bHLH domain; the sequence is ERRMANNARERLRVRDINEAFKELGRMCQLHLKSEKPQTKLLILHQAVAVILSL. Positions 676 to 699 are class A specific domain; that stretch reads QQVRERNLNPKAACLKRREEEKVS. Residues 717–726 show a composition bias toward polar residues; the sequence is TDTSNPMGHL.

Efficient DNA binding requires dimerization with another bHLH protein.

It localises to the nucleus. In terms of biological role, transcriptional regulator. Involved in the initiation of neuronal differentiation. Activates transcription by binding to the E box (5'-CANNTG-3'). May be involved in the functional network that regulates the development of the GnRH axis. The polypeptide is Transcription factor 12 (tcf12) (Danio rerio (Zebrafish)).